The primary structure comprises 322 residues: Succinate/fumarate mitochondrial transporter (322 aa).

3 Solcar repeats span residues 8 to 99 (SHPA…YRTL), 111 to 202 (GNTF…LKEF), and 212 to 303 (LPSW…VREH). A run of 6 helical transmembrane segments spans residues 11 to 31 (AINL…CHPL), 68 to 88 (FLAL…KMAI), 114 to 134 (FVAG…PMEV), 177 to 193 (GVSL…GANF), 219 to 235 (CIGL…NAPL), and 278 to 295 (GITP…VTFT).

The protein belongs to the mitochondrial carrier (TC 2.A.29) family.

The protein resides in the mitochondrion inner membrane. Transports cytoplasmic succinate, derived from isocitrate by the action of isocitrate lyase in the cytosol, into the mitochondrial matrix in exchange for fumarate. This is Succinate/fumarate mitochondrial transporter (SFC1) from Saccharomyces cerevisiae (strain ATCC 204508 / S288c) (Baker's yeast).